The following is a 942-amino-acid chain: MORC family CW-type zinc finger protein 3 (942 aa).

Glycyl lysine isopeptide (Lys-Gly) (interchain with G-Cter in SUMO2) cross-links involve residues lysine 191, lysine 205, lysine 280, and lysine 293. The nuclear matrix binding stretch occupies residues alanine 326–lysine 353. A CW-type zinc finger spans residues lysine 404–aspartate 454. The Zn(2+) site is built by cysteine 413, cysteine 416, cysteine 435, and cysteine 446. Residues serine 503 to aspartate 594 form an RNA binding region. Residues serine 517 and serine 543 each carry the phosphoserine modification. Residue lysine 558 forms a Glycyl lysine isopeptide (Lys-Gly) (interchain with G-Cter in SUMO2) linkage. Residue serine 563 is modified to Phosphoserine. Residue lysine 604 forms a Glycyl lysine isopeptide (Lys-Gly) (interchain with G-Cter in SUMO1); alternate linkage. Residue lysine 604 forms a Glycyl lysine isopeptide (Lys-Gly) (interchain with G-Cter in SUMO2); alternate linkage. The interval proline 623–leucine 654 is disordered. Positions serine 630–serine 639 are enriched in low complexity. Residues lysine 657, lysine 658, and lysine 743 each participate in a glycyl lysine isopeptide (Lys-Gly) (interchain with G-Cter in SUMO1); alternate cross-link. Residues lysine 657, lysine 658, and lysine 743 each participate in a glycyl lysine isopeptide (Lys-Gly) (interchain with G-Cter in SUMO2); alternate cross-link. Residues serine 696–aspartate 874 adopt a coiled-coil conformation. Serine 768 carries the post-translational modification Phosphoserine. Residue lysine 797 forms a Glycyl lysine isopeptide (Lys-Gly) (interchain with G-Cter in SUMO1); alternate linkage. Lysine 797 is covalently cross-linked (Glycyl lysine isopeptide (Lys-Gly) (interchain with G-Cter in SUMO2); alternate).

In terms of assembly, homodimer. The sumoylated form interacts with PML (via SUMO-interacting motif). Interacts with TP53. Sumoylation is involved in interaction with PML and localization to PML nuclear bodies.

It is found in the nucleus. The protein resides in the nucleoplasm. The protein localises to the nucleus matrix. It localises to the PML body. Its subcellular location is the chromosome. With respect to regulation, dimerization of the ATPase domain is strictly required for the catalytic activity and binding to double-stranded DNA. Disrupting the interface between ATPase and the CW domains releases autoinhibition since the CW domain sterically impedes binding of the ATPase domain to DNA. In terms of biological role, nuclear matrix protein which forms MORC3-NBs (nuclear bodies) via an ATP-dependent mechanism and plays a role in innate immunity by restricting different viruses through modulation of the IFN response. Mechanistically, possesses a primary antiviral function through a MORC3-regulated element that activates IFNB1, and this function is guarded by a secondary IFN-repressing function. Sumoylated MORC3-NBs associates with PML-NBs and recruits TP53 and SP100, thus regulating TP53 activity. Binds RNA in vitro. Histone methylation reader which binds to non-methylated (H3K4me0), monomethylated (H3K4me1), dimethylated (H3K4me2) and trimethylated (H3K4me3) 'Lys-4' on histone H3. The order of binding preference is H3K4me3 &gt; H3K4me2 &gt; H3K4me1 &gt; H3K4me0. This chain is MORC family CW-type zinc finger protein 3, found in Mus musculus (Mouse).